Here is a 465-residue protein sequence, read N- to C-terminus: Argininosuccinate lyase (465 aa).

The protein belongs to the lyase 1 family. Argininosuccinate lyase subfamily.

It localises to the cytoplasm. The enzyme catalyses 2-(N(omega)-L-arginino)succinate = fumarate + L-arginine. Its pathway is amino-acid biosynthesis; L-arginine biosynthesis; L-arginine from L-ornithine and carbamoyl phosphate: step 3/3. The polypeptide is Argininosuccinate lyase (Nitrobacter winogradskyi (strain ATCC 25391 / DSM 10237 / CIP 104748 / NCIMB 11846 / Nb-255)).